A 642-amino-acid polypeptide reads, in one-letter code: Putative ATP-binding protein YdiF (642 aa).

ABC transporter domains follow at residues 4 to 259 (LQVN…EKDL) and 327 to 541 (LRVQ…ELEK). ATP-binding positions include 36 to 43 (GRNGAGKS) and 360 to 367 (GPNGIGKS). Composition is skewed to basic and acidic residues over residues 541-550 (KMNQQEETDK) and 557-567 (SDSKRSYEEEK). The tract at residues 541–567 (KMNQQEETDKTPATVKSDSKRSYEEEK) is disordered.

It belongs to the ABC transporter superfamily. ABCF family. YdiF subfamily.

This is Putative ATP-binding protein YdiF (ydiF) from Bacillus subtilis (strain 168).